We begin with the raw amino-acid sequence, 364 residues long: Coproporphyrin III ferrochelatase (364 aa).

Residues Arg-29 and Tyr-118 each coordinate Fe-coproporphyrin III. Fe(2+)-binding residues include His-169 and Glu-250.

This sequence belongs to the ferrochelatase family.

Its subcellular location is the cytoplasm. It carries out the reaction Fe-coproporphyrin III + 2 H(+) = coproporphyrin III + Fe(2+). The protein operates within porphyrin-containing compound metabolism; protoheme biosynthesis. Involved in coproporphyrin-dependent heme b biosynthesis. Catalyzes the insertion of ferrous iron into coproporphyrin III to form Fe-coproporphyrin III. This is Coproporphyrin III ferrochelatase from Streptococcus pneumoniae (strain Hungary19A-6).